Consider the following 341-residue polypeptide: 4-hydroxy-2-oxovalerate aldolase 3 (341 aa).

The region spanning isoleucine 5–alanine 257 is the Pyruvate carboxyltransferase domain. Position 13–14 (arginine 13–aspartate 14) interacts with substrate. Aspartate 14 is a Mn(2+) binding site. Histidine 17 serves as the catalytic Proton acceptor. Substrate-binding residues include serine 167 and histidine 196. Residues histidine 196 and histidine 198 each coordinate Mn(2+). Residue tyrosine 287 coordinates substrate.

The protein belongs to the 4-hydroxy-2-oxovalerate aldolase family.

It catalyses the reaction (S)-4-hydroxy-2-oxopentanoate = acetaldehyde + pyruvate. This Cupriavidus necator (strain ATCC 17699 / DSM 428 / KCTC 22496 / NCIMB 10442 / H16 / Stanier 337) (Ralstonia eutropha) protein is 4-hydroxy-2-oxovalerate aldolase 3 (bpHI).